The sequence spans 513 residues: Probable mannosyl-oligosaccharide alpha-1,2-mannosidase 1B (513 aa).

Residues 1 to 21 (MHLSSLSLSLTALAIVSPSAA) form the signal peptide. N-linked (GlcNAc...) asparagine glycans are attached at residues asparagine 97, asparagine 117, asparagine 184, asparagine 251, asparagine 322, asparagine 348, and asparagine 368. Cysteine 334 and cysteine 363 form a disulfide bridge. Glutamate 377 acts as the Proton donor in catalysis. Threonine 503 contributes to the Ca(2+) binding site.

The protein belongs to the glycosyl hydrolase 47 family. Monomer. Ca(2+) is required as a cofactor. Mg(2+) serves as cofactor.

It is found in the cytoplasmic vesicle lumen. It catalyses the reaction N(4)-(alpha-D-Man-(1-&gt;2)-alpha-D-Man-(1-&gt;2)-alpha-D-Man-(1-&gt;3)-[alpha-D-Man-(1-&gt;2)-alpha-D-Man-(1-&gt;3)-[alpha-D-Man-(1-&gt;2)-alpha-D-Man-(1-&gt;6)]-alpha-D-Man-(1-&gt;6)]-beta-D-Man-(1-&gt;4)-beta-D-GlcNAc-(1-&gt;4)-beta-D-GlcNAc)-L-asparaginyl-[protein] (N-glucan mannose isomer 9A1,2,3B1,2,3) + 4 H2O = N(4)-(alpha-D-Man-(1-&gt;3)-[alpha-D-Man-(1-&gt;3)-[alpha-D-Man-(1-&gt;6)]-alpha-D-Man-(1-&gt;6)]-beta-D-Man-(1-&gt;4)-beta-D-GlcNAc-(1-&gt;4)-beta-D-GlcNAc)-L-asparaginyl-[protein] (N-glucan mannose isomer 5A1,2) + 4 beta-D-mannose. The catalysed reaction is N(4)-(alpha-D-Man-(1-&gt;2)-alpha-D-Man-(1-&gt;2)-alpha-D-Man-(1-&gt;3)-[alpha-D-Man-(1-&gt;3)-[alpha-D-Man-(1-&gt;2)-alpha-D-Man-(1-&gt;6)]-alpha-D-Man-(1-&gt;6)]-beta-D-Man-(1-&gt;4)-beta-D-GlcNAc-(1-&gt;4)-beta-D-GlcNAc)-L-asparaginyl-[protein] (N-glucan mannose isomer 8A1,2,3B1,3) + 3 H2O = N(4)-(alpha-D-Man-(1-&gt;3)-[alpha-D-Man-(1-&gt;3)-[alpha-D-Man-(1-&gt;6)]-alpha-D-Man-(1-&gt;6)]-beta-D-Man-(1-&gt;4)-beta-D-GlcNAc-(1-&gt;4)-beta-D-GlcNAc)-L-asparaginyl-[protein] (N-glucan mannose isomer 5A1,2) + 3 beta-D-mannose. It functions in the pathway protein modification; protein glycosylation. Its function is as follows. Involved in the maturation of Asn-linked oligosaccharides. Progressively trims alpha-1,2-linked mannose residues from Man(9)GlcNAc(2) to produce Man(5)GlcNAc(2). This Aspergillus niger (strain ATCC MYA-4892 / CBS 513.88 / FGSC A1513) protein is Probable mannosyl-oligosaccharide alpha-1,2-mannosidase 1B (mns1B).